A 566-amino-acid polypeptide reads, in one-letter code: E3 ubiquitin-protein ligase Rnf220 (566 aa).

A Glycyl lysine isopeptide (Lys-Gly) (interchain with G-Cter in SUMO2) cross-link involves residue lysine 277. A disordered region spans residues lysine 277–arginine 300. Basic and acidic residues predominate over residues alanine 291 to arginine 300. Serine 390 bears the Phosphoserine mark. Residues glutamate 485–lysine 513 are a coiled coil. A required for targeting to the cytoplasm region spans residues cysteine 514–serine 522. The RING-type zinc finger occupies cysteine 514–asparagine 553.

Interacts with SIN3B. Interacts with CTNNB1 (via Armadillo repeats 2-8). Interacts with USP7 (via MATH domain). In terms of processing, auto-ubiquitinated; leads to proteasomal degradation. In terms of tissue distribution, in the brain, expressed in the hippocampus, telenecephalon and cerebellum. No expression in astro glial cells or in neural progenitor cells.

The protein localises to the cytoplasm. The protein resides in the nucleus. It catalyses the reaction S-ubiquitinyl-[E2 ubiquitin-conjugating enzyme]-L-cysteine + [acceptor protein]-L-lysine = [E2 ubiquitin-conjugating enzyme]-L-cysteine + N(6)-ubiquitinyl-[acceptor protein]-L-lysine.. It participates in protein modification; protein ubiquitination. Functionally, E3 ubiquitin-protein ligase that promotes the ubiquitination and proteasomal degradation of SIN3B. Independently of its E3 ligase activity, acts as a CTNNB1 stabilizer through USP7-mediated deubiquitination of CTNNB1 and promotes Wnt signaling. Plays a critical role in the regulation of nuclear lamina. The sequence is that of E3 ubiquitin-protein ligase Rnf220 (Rnf220) from Mus musculus (Mouse).